The chain runs to 379 residues: Dual-specificity RNA methyltransferase RlmN (379 aa).

Catalysis depends on glutamate 90, which acts as the Proton acceptor. One can recognise a Radical SAM core domain in the interval 96–348 (EPNRGTLCVS…TTVRKTRGDD (253 aa)). An intrachain disulfide couples cysteine 103 to cysteine 353. [4Fe-4S] cluster is bound by residues cysteine 110, cysteine 114, and cysteine 117. S-adenosyl-L-methionine contacts are provided by residues 179–180 (GE), serine 211, 233–235 (SLH), and asparagine 310. Cysteine 353 serves as the catalytic S-methylcysteine intermediate.

The protein belongs to the radical SAM superfamily. RlmN family. It depends on [4Fe-4S] cluster as a cofactor.

It is found in the cytoplasm. It carries out the reaction adenosine(2503) in 23S rRNA + 2 reduced [2Fe-2S]-[ferredoxin] + 2 S-adenosyl-L-methionine = 2-methyladenosine(2503) in 23S rRNA + 5'-deoxyadenosine + L-methionine + 2 oxidized [2Fe-2S]-[ferredoxin] + S-adenosyl-L-homocysteine. It catalyses the reaction adenosine(37) in tRNA + 2 reduced [2Fe-2S]-[ferredoxin] + 2 S-adenosyl-L-methionine = 2-methyladenosine(37) in tRNA + 5'-deoxyadenosine + L-methionine + 2 oxidized [2Fe-2S]-[ferredoxin] + S-adenosyl-L-homocysteine. Specifically methylates position 2 of adenine 2503 in 23S rRNA and position 2 of adenine 37 in tRNAs. m2A2503 modification seems to play a crucial role in the proofreading step occurring at the peptidyl transferase center and thus would serve to optimize ribosomal fidelity. The sequence is that of Dual-specificity RNA methyltransferase RlmN from Nitrosomonas eutropha (strain DSM 101675 / C91 / Nm57).